Consider the following 1433-residue polypeptide: Probable ATP-dependent RNA helicase spindle-E (1433 aa).

Positions 126–294 (INAINENPVV…FANERSAPPV (169 aa)) constitute a Helicase ATP-binding domain. 139-146 (GETGCGKT) contributes to the ATP binding site. A DEAH box motif is present at residues 240-243 (DEVH). The region spanning 355–526 (TGKSYNQSLR…NCVLKAKELK (172 aa)) is the Helicase C-terminal domain. In terms of domain architecture, Tudor spans 935–998 (AGAITKGLML…RLMSQDLLRH (64 aa)).

This sequence belongs to the DEAD box helicase family. DEAH subfamily.

It is found in the cytoplasm. It carries out the reaction ATP + H2O = ADP + phosphate + H(+). Functionally, probable ATP-binding RNA helicase which plays a central role during spermatogenesis and oogenesis by repressing transposable elements and preventing their mobilization, which is essential for the germline integrity. Acts via the piRNA metabolic process, which mediates the repression of transposable elements during meiosis by forming complexes composed of piRNAs and Piwi and govern the methylation and subsequent repression of transposons. Involved in the repression of LTR retrotransposon copia. Also involved in telomere regulation by repressing specialized telomeric retroelements HeT-A, TAHRE, and TART; Drosophila telomeres being maintained by transposition of specialized telomeric retroelements. Involved in telomeric trans-silencing, a repression mechanism by which a transposon or a transgene inserted in subtelomeric heterochromatin has the capacity to repress in trans in the female germline, a homologous transposon, or transgene located in euchromatin. Involved in the repression of testis-expressed Stellate genes by the homologous Su(Ste) repeats. Required for anteroposterior and dorsoventral axis formation during oogenesis. The chain is Probable ATP-dependent RNA helicase spindle-E (spn-E) from Drosophila pseudoobscura pseudoobscura (Fruit fly).